The following is a 256-amino-acid chain: uncharacterized protein (256 aa).

The N-terminal stretch at 1 to 24 (MIKRVNKLVLGISLLFLVISITAG) is a signal peptide. The N-palmitoyl cysteine moiety is linked to residue cysteine 25. The S-diacylglycerol cysteine moiety is linked to residue cysteine 25.

The protein belongs to the staphylococcal tandem lipoprotein family.

It is found in the cell membrane. This is an uncharacterized protein from Staphylococcus aureus (strain NCTC 8325 / PS 47).